The sequence spans 214 residues: tRNA (guanine-N(7)-)-methyltransferase (214 aa).

S-adenosyl-L-methionine is bound by residues Glu-44, Glu-69, Asp-96, and Asp-118. The active site involves Asp-118. Substrate-binding positions include Lys-122, Asp-154, and 191–194 (TEYE).

This sequence belongs to the class I-like SAM-binding methyltransferase superfamily. TrmB family.

It catalyses the reaction guanosine(46) in tRNA + S-adenosyl-L-methionine = N(7)-methylguanosine(46) in tRNA + S-adenosyl-L-homocysteine. It functions in the pathway tRNA modification; N(7)-methylguanine-tRNA biosynthesis. Functionally, catalyzes the formation of N(7)-methylguanine at position 46 (m7G46) in tRNA. This Listeria monocytogenes serovar 1/2a (strain ATCC BAA-679 / EGD-e) protein is tRNA (guanine-N(7)-)-methyltransferase.